The sequence spans 799 residues: Elongation factor G, mitochondrial (799 aa).

A mitochondrion-targeting transit peptide spans 1–24 (MRCPSLARLPHRAVSGLTRTPVRF). A tr-type G domain is found at 97 to 384 (SRVRNIGIAA…GVIDYLPNPS (288 aa)). Residues 106 to 113 (AHIDSGKT), 182 to 186 (DTPGH), and 236 to 239 (NKMD) each bind GTP.

It belongs to the TRAFAC class translation factor GTPase superfamily. Classic translation factor GTPase family. EF-G/EF-2 subfamily.

It is found in the mitochondrion. It participates in protein biosynthesis; polypeptide chain elongation. In terms of biological role, mitochondrial GTPase that catalyzes the GTP-dependent ribosomal translocation step during translation elongation. During this step, the ribosome changes from the pre-translocational (PRE) to the post-translocational (POST) state as the newly formed A-site-bound peptidyl-tRNA and P-site-bound deacylated tRNA move to the P and E sites, respectively. Catalyzes the coordinated movement of the two tRNA molecules, the mRNA and conformational changes in the ribosome. This Emericella nidulans (strain FGSC A4 / ATCC 38163 / CBS 112.46 / NRRL 194 / M139) (Aspergillus nidulans) protein is Elongation factor G, mitochondrial (mef1).